The following is a 266-amino-acid chain: Zinc finger protein SNAI2 (266 aa).

The tract at residues 1-20 is SNAG domain; the sequence is MPRSFLVKKHFNSAKKPNYG. The segment at 75–115 is disordered; sequence SGYPSSLGRVSPPPQSDTSSKDHSGSESPISDEEERLQTKL. 4 consecutive C2H2-type zinc fingers follow at residues 126–148, 157–179, 183–205, and 211–233; these read FQCS…KQLH, FSCK…IRTH, CVCK…IRTH, and FSCP…LQTH. The segment at 239–262 adopts a C2H2-type 5; atypical zinc-finger fold; it reads YQCKNCSKTFSRMSLLHKHEESGC.

It belongs to the snail C2H2-type zinc-finger protein family. As to quaternary structure, interacts (via SNAG domain) with limd1 (via LIM domains), wtip (via LIM domains) and ajuba (via LIM domains). Interacts with elp3. First expressed on the lateral side of stage 12 embryos. At stage 14, strongly expressed in the lateral neural folds. At stage 16, expressed in pre-migratory neural crest cells. At stage 18, expression is dispersed over the neural plate in a pattern surrounding the rhombomeres. At stage 22, expressed in neural crest derivatives, including the branchial arches and the tissues surrounding the eyes and forebrain. After stage 17, expression is weak in the lateral plate mesoderm, increasing at stage 26, but was down-regulated in the pronephros region at stage 26.

The protein localises to the nucleus. Functionally, probable transcriptional repressor. Acts downstream of snai1 in the specification of the neural crest and neural crest migration. This is Zinc finger protein SNAI2 (snai2) from Xenopus laevis (African clawed frog).